The following is a 168-amino-acid chain: ATP synthase subunit b (168 aa).

A helical membrane pass occupies residues 9–29 (AIPFGTIAYTLFIFLILLVML).

It belongs to the ATPase B chain family. F-type ATPases have 2 components, F(1) - the catalytic core - and F(0) - the membrane proton channel. F(1) has five subunits: alpha(3), beta(3), gamma(1), delta(1), epsilon(1). F(0) has three main subunits: a(1), b(2) and c(10-14). The alpha and beta chains form an alternating ring which encloses part of the gamma chain. F(1) is attached to F(0) by a central stalk formed by the gamma and epsilon chains, while a peripheral stalk is formed by the delta and b chains.

It is found in the cell membrane. F(1)F(0) ATP synthase produces ATP from ADP in the presence of a proton or sodium gradient. F-type ATPases consist of two structural domains, F(1) containing the extramembraneous catalytic core and F(0) containing the membrane proton channel, linked together by a central stalk and a peripheral stalk. During catalysis, ATP synthesis in the catalytic domain of F(1) is coupled via a rotary mechanism of the central stalk subunits to proton translocation. Its function is as follows. Component of the F(0) channel, it forms part of the peripheral stalk, linking F(1) to F(0). The protein is ATP synthase subunit b of Bacillus cereus (strain G9842).